The chain runs to 177 residues: Adenine phosphoribosyltransferase (177 aa).

This sequence belongs to the purine/pyrimidine phosphoribosyltransferase family. As to quaternary structure, homodimer.

It localises to the cytoplasm. The catalysed reaction is AMP + diphosphate = 5-phospho-alpha-D-ribose 1-diphosphate + adenine. It functions in the pathway purine metabolism; AMP biosynthesis via salvage pathway; AMP from adenine: step 1/1. Its function is as follows. Catalyzes a salvage reaction resulting in the formation of AMP, that is energically less costly than de novo synthesis. The chain is Adenine phosphoribosyltransferase from Cutibacterium acnes (strain DSM 16379 / KPA171202) (Propionibacterium acnes).